Here is a 441-residue protein sequence, read N- to C-terminus: ATP-dependent protease ATPase subunit HslU (441 aa).

Residues Val18, 60–65, Asp253, Glu319, and Arg391 contribute to the ATP site; that span reads GVGKTE.

The protein belongs to the ClpX chaperone family. HslU subfamily. In terms of assembly, a double ring-shaped homohexamer of HslV is capped on each side by a ring-shaped HslU homohexamer. The assembly of the HslU/HslV complex is dependent on binding of ATP.

The protein localises to the cytoplasm. In terms of biological role, ATPase subunit of a proteasome-like degradation complex; this subunit has chaperone activity. The binding of ATP and its subsequent hydrolysis by HslU are essential for unfolding of protein substrates subsequently hydrolyzed by HslV. HslU recognizes the N-terminal part of its protein substrates and unfolds these before they are guided to HslV for hydrolysis. In Nitratidesulfovibrio vulgaris (strain DP4) (Desulfovibrio vulgaris), this protein is ATP-dependent protease ATPase subunit HslU.